Consider the following 361-residue polypeptide: Phospho-N-acetylmuramoyl-pentapeptide-transferase (361 aa).

10 helical membrane-spanning segments follow: residues 25–45 (RGILAALTALFLSLWMGPAVI), 73–93 (TMGGSLILLTVTLSVLLWGDL), 98–118 (VWLVLAVMICFGAIGWYDDWI), 139–159 (IFGLAAGLFLYYTADVPAAIT), 168–188 (IALPLVGVSFVVIAYFWIVGF), 200–220 (GLAIMPTVLVACALGVFAYAS), 237–257 (AGELIIICSAIAGAGLGFLWF), 264–284 (VFMGDIGALSLGAVLGTIAVI), 289–309 (MVLVIMGGVFVIETLSVIIQV), and 339–359 (VIVRFWIISVVLVLIGLATLK).

It belongs to the glycosyltransferase 4 family. MraY subfamily. Mg(2+) serves as cofactor.

It is found in the cell inner membrane. It catalyses the reaction UDP-N-acetyl-alpha-D-muramoyl-L-alanyl-gamma-D-glutamyl-meso-2,6-diaminopimeloyl-D-alanyl-D-alanine + di-trans,octa-cis-undecaprenyl phosphate = di-trans,octa-cis-undecaprenyl diphospho-N-acetyl-alpha-D-muramoyl-L-alanyl-D-glutamyl-meso-2,6-diaminopimeloyl-D-alanyl-D-alanine + UMP. The protein operates within cell wall biogenesis; peptidoglycan biosynthesis. Functionally, catalyzes the initial step of the lipid cycle reactions in the biosynthesis of the cell wall peptidoglycan: transfers peptidoglycan precursor phospho-MurNAc-pentapeptide from UDP-MurNAc-pentapeptide onto the lipid carrier undecaprenyl phosphate, yielding undecaprenyl-pyrophosphoryl-MurNAc-pentapeptide, known as lipid I. This chain is Phospho-N-acetylmuramoyl-pentapeptide-transferase, found in Xanthomonas oryzae pv. oryzae (strain MAFF 311018).